A 98-amino-acid polypeptide reads, in one-letter code: NADH-ubiquinone oxidoreductase chain 4L (98 aa).

3 helical membrane-spanning segments follow: residues methionine 1–leucine 21, serine 29–leucine 49, and isoleucine 61–valine 81.

Belongs to the complex I subunit 4L family. Core subunit of respiratory chain NADH dehydrogenase (Complex I) which is composed of 45 different subunits.

The protein localises to the mitochondrion inner membrane. The catalysed reaction is a ubiquinone + NADH + 5 H(+)(in) = a ubiquinol + NAD(+) + 4 H(+)(out). Its function is as follows. Core subunit of the mitochondrial membrane respiratory chain NADH dehydrogenase (Complex I) which catalyzes electron transfer from NADH through the respiratory chain, using ubiquinone as an electron acceptor. Part of the enzyme membrane arm which is embedded in the lipid bilayer and involved in proton translocation. This is NADH-ubiquinone oxidoreductase chain 4L (MT-ND4L) from Platyrrhinus dorsalis (Thomas's broad-nosed bat).